A 478-amino-acid chain; its full sequence is ATP synthase subunit beta (478 aa).

151–158 serves as a coordination point for ATP; the sequence is GGAGVGKT.

Belongs to the ATPase alpha/beta chains family. As to quaternary structure, F-type ATPases have 2 components, CF(1) - the catalytic core - and CF(0) - the membrane proton channel. CF(1) has five subunits: alpha(3), beta(3), gamma(1), delta(1), epsilon(1). CF(0) has three main subunits: a(1), b(2) and c(9-12). The alpha and beta chains form an alternating ring which encloses part of the gamma chain. CF(1) is attached to CF(0) by a central stalk formed by the gamma and epsilon chains, while a peripheral stalk is formed by the delta and b chains.

Its subcellular location is the cell inner membrane. It catalyses the reaction ATP + H2O + 4 H(+)(in) = ADP + phosphate + 5 H(+)(out). Produces ATP from ADP in the presence of a proton gradient across the membrane. The catalytic sites are hosted primarily by the beta subunits. This chain is ATP synthase subunit beta, found in Xanthobacter autotrophicus (strain ATCC BAA-1158 / Py2).